Reading from the N-terminus, the 163-residue chain is Norbelladine synthase (163 aa).

68–71 (YHKE) serves as a coordination point for tyramine. The active-site Proton donor is Lys83.

This sequence belongs to the BetVI family. As to expression, mostly expressed in bulbs, and, to a lower extent, in roots, stems, leaves and flowers.

The enzyme catalyses 3,4-dihydroxybenzaldehyde + tyramine + AH2 = norbelladine + A + H2O. It participates in alkaloid biosynthesis. Functionally, catalyzes the condensation of tyramine and 3,4-dihydroxybenzaldehyde (3,4-DHBA) to form norbelladine, the common precursor to all Amaryllidaceae alkaloids such as galanthamine, lycorine and haemanthamine, and including haemanthamine- and crinamine-type alkaloids, promising anticancer agents. The protein is Norbelladine synthase of Narcissus pseudonarcissus (Daffodil).